The chain runs to 283 residues: Phosphatidylglycerol--prolipoprotein diacylglyceryl transferase (283 aa).

The next 7 helical transmembrane spans lie at 21–41, 60–80, 95–115, 124–144, 176–196, 203–223, and 239–259; these read LAIR…LWLA, LLFA…VLFY, VWTG…AMLW, FFTI…AGRL, SQLY…NWFI, GAVS…VEYV, and MGQI…VWAF. R143 serves as a coordination point for a 1,2-diacyl-sn-glycero-3-phospho-(1'-sn-glycerol).

It belongs to the Lgt family.

The protein resides in the cell inner membrane. The enzyme catalyses L-cysteinyl-[prolipoprotein] + a 1,2-diacyl-sn-glycero-3-phospho-(1'-sn-glycerol) = an S-1,2-diacyl-sn-glyceryl-L-cysteinyl-[prolipoprotein] + sn-glycerol 1-phosphate + H(+). The protein operates within protein modification; lipoprotein biosynthesis (diacylglyceryl transfer). Its function is as follows. Catalyzes the transfer of the diacylglyceryl group from phosphatidylglycerol to the sulfhydryl group of the N-terminal cysteine of a prolipoprotein, the first step in the formation of mature lipoproteins. The sequence is that of Phosphatidylglycerol--prolipoprotein diacylglyceryl transferase from Aliivibrio salmonicida (strain LFI1238) (Vibrio salmonicida (strain LFI1238)).